Consider the following 355-residue polypeptide: C-C chemokine receptor type 8 (355 aa).

At 1 to 35 the chain is on the extracellular side; that stretch reads MDYTLDLSVTTVTDYYYPDIFSSPCDAELIQTNGK. Residues 36 to 63 form a helical membrane-spanning segment; the sequence is LLLAVFYCLLFVFSLLGNSLVILVLVVC. At 64 to 73 the chain is on the cytoplasmic side; that stretch reads KKLRSITDVY. The helical transmembrane segment at 74–93 threads the bilayer; sequence LLNLALSDLLFVFSFPFQTY. Topologically, residues 94–107 are extracellular; it reads YLLDQWVFGTVMCK. A disulfide bridge links C106 with C183. A helical transmembrane segment spans residues 108–129; sequence VVSGFYYIGFYSSMFFITLMSV. At 130-146 the chain is on the cytoplasmic side; it reads DRYLAVVHAVYALKVRT. A helical membrane pass occupies residues 147–171; it reads IRMGTTLCLAVWLTAIMATIPLLVF. Residues 172 to 202 are Extracellular-facing; it reads YQVASEDGVLQCYSFYNQQTLKWKIFTNFKM. Residues 203–222 form a helical membrane-spanning segment; it reads NILGLLIPFTIFMFCYIKIL. Residues 223–238 lie on the Cytoplasmic side of the membrane; sequence HQLKRCQNHNKTKAIR. Residues 239-263 traverse the membrane as a helical segment; the sequence is LVLIVVIASLLFWVPFNVVLFLTSL. Over 264-280 the chain is Extracellular; that stretch reads HSMHILDGCSISQQLTY. A helical transmembrane segment spans residues 281–304; the sequence is ATHVTEIISFTHCCVNPVIYAFVG. Over 305–355 the chain is Cytoplasmic; the sequence is EKFKKHLSEIFQKSCSQIFNYLGRQMPRESCEKSSSCQQHSSRSSSVDYIL.

The protein belongs to the G-protein coupled receptor 1 family.

It is found in the cell membrane. Receptor for the chemokine CCL1/SCYA1/I-309. May regulate monocyte chemotaxis and thymic cell line apoptosis. Alternative coreceptor with CD4 for HIV-1 infection. The protein is C-C chemokine receptor type 8 (CCR8) of Homo sapiens (Human).